The primary structure comprises 379 residues: Homoserine O-acetyltransferase (379 aa).

The tract at residues 1-24 (MSHDTTPPLPATGAWREGDPPGDR) is disordered. The region spanning 60–365 (NAVLVLHALT…ASGHDGFLTE (306 aa)) is the AB hydrolase-1 domain. The active-site Nucleophile is the S165. R236 provides a ligand contact to substrate. Active-site residues include D329 and H359. A substrate-binding site is contributed by D360.

It belongs to the AB hydrolase superfamily. MetX family. In terms of assembly, homodimer.

Its subcellular location is the cytoplasm. The enzyme catalyses L-homoserine + acetyl-CoA = O-acetyl-L-homoserine + CoA. It participates in amino-acid biosynthesis; L-methionine biosynthesis via de novo pathway; O-acetyl-L-homoserine from L-homoserine: step 1/1. Its function is as follows. Transfers an acetyl group from acetyl-CoA to L-homoserine, forming acetyl-L-homoserine. The protein is Homoserine O-acetyltransferase of Thermobifida fusca (strain YX).